The chain runs to 130 residues: Small ribosomal subunit protein uS9 (130 aa).

Residues 109-130 (RKKERKKYGQRAARARYQYSKR) are disordered.

It belongs to the universal ribosomal protein uS9 family.

This Nitratidesulfovibrio vulgaris (strain DSM 19637 / Miyazaki F) (Desulfovibrio vulgaris) protein is Small ribosomal subunit protein uS9.